Here is an 854-residue protein sequence, read N- to C-terminus: DNA mismatch repair protein MutS (854 aa).

An ATP-binding site is contributed by 614–621; the sequence is GPNMGGKS.

This sequence belongs to the DNA mismatch repair MutS family.

Functionally, this protein is involved in the repair of mismatches in DNA. It is possible that it carries out the mismatch recognition step. This protein has a weak ATPase activity. The sequence is that of DNA mismatch repair protein MutS from Yersinia pestis bv. Antiqua (strain Antiqua).